The sequence spans 102 residues: Large ribosomal subunit protein bL21 (102 aa).

This sequence belongs to the bacterial ribosomal protein bL21 family. Part of the 50S ribosomal subunit. Contacts protein L20.

In terms of biological role, this protein binds to 23S rRNA in the presence of protein L20. The chain is Large ribosomal subunit protein bL21 from Listeria innocua serovar 6a (strain ATCC BAA-680 / CLIP 11262).